The following is a 223-amino-acid chain: UPF0173 metal-dependent hydrolase THA_544 (223 aa).

This sequence belongs to the UPF0173 family.

This Thermosipho africanus (strain TCF52B) protein is UPF0173 metal-dependent hydrolase THA_544.